Consider the following 306-residue polypeptide: UDP-3-O-acyl-N-acetylglucosamine deacetylase (306 aa).

Positions 79, 238, and 242 each coordinate Zn(2+). Histidine 265 (proton donor) is an active-site residue.

The protein belongs to the LpxC family. Requires Zn(2+) as cofactor.

It catalyses the reaction a UDP-3-O-[(3R)-3-hydroxyacyl]-N-acetyl-alpha-D-glucosamine + H2O = a UDP-3-O-[(3R)-3-hydroxyacyl]-alpha-D-glucosamine + acetate. Its pathway is glycolipid biosynthesis; lipid IV(A) biosynthesis; lipid IV(A) from (3R)-3-hydroxytetradecanoyl-[acyl-carrier-protein] and UDP-N-acetyl-alpha-D-glucosamine: step 2/6. In terms of biological role, catalyzes the hydrolysis of UDP-3-O-myristoyl-N-acetylglucosamine to form UDP-3-O-myristoylglucosamine and acetate, the committed step in lipid A biosynthesis. The sequence is that of UDP-3-O-acyl-N-acetylglucosamine deacetylase from Hamiltonella defensa subsp. Acyrthosiphon pisum (strain 5AT).